The chain runs to 678 residues: Vacuolar fusion protein mon1 (678 aa).

Disordered stretches follow at residues 1–116 (MDRD…YTSP), 449–474 (EENN…VTSP), and 568–591 (FETS…KTTE). A compositionally biased stretch (low complexity) spans 10–20 (NDGTNDNNDTT). Over residues 63–77 (RPTTQVSTIDISTLS) the composition is skewed to polar residues. Low complexity predominate over residues 87–105 (STSATSATSATSATRSVAS). A compositionally biased stretch (polar residues) spans 106-116 (PQSSASGYTSP). Over residues 450-459 (ENNSNNTNNP) the composition is skewed to low complexity. The segment covering 460–471 (EQPPQPPPPKPV) has biased composition (pro residues).

Belongs to the MON1/SAND family.

The protein resides in the endosome. It is found in the multivesicular body membrane. It localises to the prevacuolar compartment membrane. The protein localises to the vacuole membrane. Functionally, in complex with CCZ1, is required for multiple vacuole delivery pathways including the cytoplasm to vacuole transport (Cvt), autophagy, pexophagy and endocytosis. The MON1-CCZ1 complex acts at the fusion of vesicles with the vacuole, through its regulation of the SNARE complex during the coordinated priming and docking stages of fusion, and particularly at the stage of tethering/docking. The protein is Vacuolar fusion protein mon1 (apg-13) of Neurospora crassa (strain ATCC 24698 / 74-OR23-1A / CBS 708.71 / DSM 1257 / FGSC 987).